Reading from the N-terminus, the 215-residue chain is Large ribosomal subunit protein uL1 (215 aa).

The protein belongs to the universal ribosomal protein uL1 family. Part of the 50S ribosomal subunit.

In terms of biological role, binds directly to 23S rRNA. Probably involved in E site tRNA release. Its function is as follows. Protein L1 is also a translational repressor protein, it controls the translation of its operon by binding to its mRNA. The chain is Large ribosomal subunit protein uL1 from Cenarchaeum symbiosum (strain A).